The sequence spans 353 residues: Phosphate acyltransferase (353 aa).

The protein belongs to the PlsX family. As to quaternary structure, homodimer. Probably interacts with PlsY.

The protein localises to the cytoplasm. It catalyses the reaction a fatty acyl-[ACP] + phosphate = an acyl phosphate + holo-[ACP]. It participates in lipid metabolism; phospholipid metabolism. In terms of biological role, catalyzes the reversible formation of acyl-phosphate (acyl-PO(4)) from acyl-[acyl-carrier-protein] (acyl-ACP). This enzyme utilizes acyl-ACP as fatty acyl donor, but not acyl-CoA. This Afipia carboxidovorans (strain ATCC 49405 / DSM 1227 / KCTC 32145 / OM5) (Oligotropha carboxidovorans) protein is Phosphate acyltransferase.